The following is a 436-amino-acid chain: Prenyltransferase nscD (436 aa).

The protein belongs to the tryptophan dimethylallyltransferase family.

It participates in secondary metabolite biosynthesis. Its function is as follows. Prenyltransferase; part of the gene cluster that mediates the biosynthesis of neosartoricin B, a prenylated anthracenone that probably exhibits T-cell antiproliferative activity, suggestive of a physiological role as an immunosuppressive agent. The non-reducing polyketide synthase nscA probably synthesizes and cyclizes the decaketide backbone. The hydrolase nscB then mediates the product release through hydrolysis followed by spontaneous decarboxylation. The prenyltransferase nscD catalyzes the addition of the dimethylallyl group to the aromatic C5. The FAD-dependent monooxygenase nscC is then responsible for the stereospecific hydroxylation at C2. Neosartoricin B can be converted into two additional compounds neosartoricins C and D. Neosartoricin C is a spirocyclic compound that is cyclized through the attack of C3 hydroxyl on C14, followed by dehydration. On the other hand, neosartoricin D is a further cyclized compound in which attack of C2 on C14 in neosartoricin C results in the formation of the acetal-containing dioxabicyclo-octanone ring. Both of these compounds are novel and possibly represent related metabolites of the gene cluster. This Arthroderma otae (strain ATCC MYA-4605 / CBS 113480) (Microsporum canis) protein is Prenyltransferase nscD.